Here is a 209-residue protein sequence, read N- to C-terminus: Uracil phosphoribosyltransferase (209 aa).

5-phospho-alpha-D-ribose 1-diphosphate contacts are provided by residues Arg-79, Arg-104, and 131 to 139 (DPMLATANS). Uracil contacts are provided by residues Ile-194 and 199–201 (GDA). 5-phospho-alpha-D-ribose 1-diphosphate is bound at residue Asp-200.

Belongs to the UPRTase family. Mg(2+) serves as cofactor.

It catalyses the reaction UMP + diphosphate = 5-phospho-alpha-D-ribose 1-diphosphate + uracil. Its pathway is pyrimidine metabolism; UMP biosynthesis via salvage pathway; UMP from uracil: step 1/1. Its activity is regulated as follows. Allosterically activated by GTP. Functionally, catalyzes the conversion of uracil and 5-phospho-alpha-D-ribose 1-diphosphate (PRPP) to UMP and diphosphate. This is Uracil phosphoribosyltransferase from Mesorhizobium japonicum (strain LMG 29417 / CECT 9101 / MAFF 303099) (Mesorhizobium loti (strain MAFF 303099)).